Here is a 108-residue protein sequence, read N- to C-terminus: Protein translation factor SUI1 (108 aa).

Positions 1-20 (MSIENLKSFDPFADTGDDEA) are disordered.

It belongs to the SUI1 family.

Additional factor that functions in concert with eIF-2 and the initiator tRNA in directing the ribosome to the proper start site of translation. The sequence is that of Protein translation factor SUI1 (SUI1A) from Eremothecium gossypii (strain ATCC 10895 / CBS 109.51 / FGSC 9923 / NRRL Y-1056) (Yeast).